Here is a 316-residue protein sequence, read N- to C-terminus: 4-hydroxy-3-methylbut-2-enyl diphosphate reductase (316 aa).

Cys-12 is a [4Fe-4S] cluster binding site. Positions 41 and 74 each coordinate (2E)-4-hydroxy-3-methylbut-2-enyl diphosphate. Residues His-41 and His-74 each coordinate dimethylallyl diphosphate. Positions 41 and 74 each coordinate isopentenyl diphosphate. Cys-96 is a binding site for [4Fe-4S] cluster. His-124 is a binding site for (2E)-4-hydroxy-3-methylbut-2-enyl diphosphate. His-124 lines the dimethylallyl diphosphate pocket. His-124 is a binding site for isopentenyl diphosphate. Catalysis depends on Glu-126, which acts as the Proton donor. Thr-167 contacts (2E)-4-hydroxy-3-methylbut-2-enyl diphosphate. Cys-197 lines the [4Fe-4S] cluster pocket. Ser-225, Ser-226, Asn-227, and Ser-269 together coordinate (2E)-4-hydroxy-3-methylbut-2-enyl diphosphate. Positions 225, 226, 227, and 269 each coordinate dimethylallyl diphosphate. Ser-225, Ser-226, Asn-227, and Ser-269 together coordinate isopentenyl diphosphate.

Belongs to the IspH family. In terms of assembly, homodimer. The cofactor is [4Fe-4S] cluster.

It carries out the reaction isopentenyl diphosphate + 2 oxidized [2Fe-2S]-[ferredoxin] + H2O = (2E)-4-hydroxy-3-methylbut-2-enyl diphosphate + 2 reduced [2Fe-2S]-[ferredoxin] + 2 H(+). The enzyme catalyses dimethylallyl diphosphate + 2 oxidized [2Fe-2S]-[ferredoxin] + H2O = (2E)-4-hydroxy-3-methylbut-2-enyl diphosphate + 2 reduced [2Fe-2S]-[ferredoxin] + 2 H(+). It functions in the pathway isoprenoid biosynthesis; dimethylallyl diphosphate biosynthesis; dimethylallyl diphosphate from (2E)-4-hydroxy-3-methylbutenyl diphosphate: step 1/1. The protein operates within isoprenoid biosynthesis; isopentenyl diphosphate biosynthesis via DXP pathway; isopentenyl diphosphate from 1-deoxy-D-xylulose 5-phosphate: step 6/6. Functionally, catalyzes the conversion of 1-hydroxy-2-methyl-2-(E)-butenyl 4-diphosphate (HMBPP) into a mixture of isopentenyl diphosphate (IPP) and dimethylallyl diphosphate (DMAPP). Acts in the terminal step of the DOXP/MEP pathway for isoprenoid precursor biosynthesis. This Cronobacter sakazakii (strain ATCC BAA-894) (Enterobacter sakazakii) protein is 4-hydroxy-3-methylbut-2-enyl diphosphate reductase.